Reading from the N-terminus, the 223-residue chain is UPF0502 protein Avin_04790 (223 aa).

It belongs to the UPF0502 family.

This is UPF0502 protein Avin_04790 from Azotobacter vinelandii (strain DJ / ATCC BAA-1303).